We begin with the raw amino-acid sequence, 148 residues long: MTHSKRNTRKLRGHVSHGHGRVGKHRKHPGGRGMAGPEHHHRINVFKYHPGHIGKHGMRHFHLMRNQYYCPSINLSKLWSLVTEEERQKAQTDKSKVILIDVVKHGYYKVLGKGLLPEVPLVVKAKLFTPTAEKRIKQVGGACVLRAQ.

Over residues 1-30 (MTHSKRNTRKLRGHVSHGHGRVGKHRKHPG) the composition is skewed to basic residues. Positions 1-38 (MTHSKRNTRKLRGHVSHGHGRVGKHRKHPGGRGMAGPE) are disordered.

This sequence belongs to the universal ribosomal protein uL15 family.

The sequence is that of Large ribosomal subunit protein uL15 (RPL27A) from Euplotes crassus.